The following is a 132-amino-acid chain: Fatty acid-binding protein, adipocyte (132 aa).

Position 2 is an N-acetylcysteine (cysteine 2). Serine 13 is modified (phosphoserine). A Phosphotyrosine; by Tyr-kinases modification is found at tyrosine 20. Positions 22–32 (KEVGVGFATRK) match the Nuclear localization signal motif. Position 127–129 (127–129 (RVY)) interacts with a fatty acid.

This sequence belongs to the calycin superfamily. Fatty-acid binding protein (FABP) family. In terms of assembly, monomer. Homodimer. Interacts with PPARG.

The protein localises to the cytoplasm. Its subcellular location is the nucleus. Its function is as follows. Lipid transport protein in adipocytes. Binds both long chain fatty acids and retinoic acid. Delivers long-chain fatty acids and retinoic acid to their cognate receptors in the nucleus. The polypeptide is Fatty acid-binding protein, adipocyte (FABP4) (Cervus elaphus (Red deer)).